The primary structure comprises 529 residues: BTB/POZ domain-containing protein 6 (529 aa).

In terms of domain architecture, BTB spans 127–197 (ADVHFIVGPA…LYSDEIDLEA (71 aa)).

In terms of assembly, homodimer and heterodimer. Interacts with cul3 via the BTB domain.

The protein localises to the cytoplasm. In terms of biological role, adapter protein for the cul3 E3 ubiquitin-protein ligase complex. Involved in late neuronal development and muscle formation. The chain is BTB/POZ domain-containing protein 6 (btbd6) from Xenopus tropicalis (Western clawed frog).